We begin with the raw amino-acid sequence, 329 residues long: Ribonucleoside-diphosphate reductase subunit beta (329 aa).

Fe cation-binding residues include aspartate 66, glutamate 97, and histidine 101. Residue tyrosine 105 is part of the active site. Positions 164, 198, and 201 each coordinate Fe cation.

This sequence belongs to the ribonucleoside diphosphate reductase small chain family. As to quaternary structure, tetramer of two alpha and two beta subunits. Fe cation is required as a cofactor.

The enzyme catalyses a 2'-deoxyribonucleoside 5'-diphosphate + [thioredoxin]-disulfide + H2O = a ribonucleoside 5'-diphosphate + [thioredoxin]-dithiol. In terms of biological role, provides the precursors necessary for DNA synthesis. Catalyzes the biosynthesis of deoxyribonucleotides from the corresponding ribonucleotides. This chain is Ribonucleoside-diphosphate reductase subunit beta (bnrdF), found in Bacillus pumilus (Bacillus mesentericus).